Here is a 482-residue protein sequence, read N- to C-terminus: Membrane-bound lytic murein transglycosylase F (482 aa).

The N-terminal stretch at 1–18 (MKGLFLRIITALALLFWA) is a signal peptide. The non-LT domain stretch occupies residues 19 to 267 (IDMVFPWQFL…NLKEKYLGHI (249 aa)). The interval 268 to 482 (SQFDYVDTRS…NLEEIKENED (215 aa)) is LT domain. The active site involves E312. The segment covering 457–470 (ENQTTNDNANNESA) has biased composition (polar residues). The tract at residues 457–482 (ENQTTNDNANNESAVKNLEEIKENED) is disordered. Residues 473 to 482 (NLEEIKENED) are compositionally biased toward basic and acidic residues.

In the N-terminal section; belongs to the bacterial solute-binding protein 3 family. This sequence in the C-terminal section; belongs to the transglycosylase Slt family.

It is found in the cell outer membrane. It carries out the reaction Exolytic cleavage of the (1-&gt;4)-beta-glycosidic linkage between N-acetylmuramic acid (MurNAc) and N-acetylglucosamine (GlcNAc) residues in peptidoglycan, from either the reducing or the non-reducing ends of the peptidoglycan chains, with concomitant formation of a 1,6-anhydrobond in the MurNAc residue.. Functionally, murein-degrading enzyme that degrades murein glycan strands and insoluble, high-molecular weight murein sacculi, with the concomitant formation of a 1,6-anhydromuramoyl product. Lytic transglycosylases (LTs) play an integral role in the metabolism of the peptidoglycan (PG) sacculus. Their lytic action creates space within the PG sacculus to allow for its expansion as well as for the insertion of various structures such as secretion systems and flagella. The polypeptide is Membrane-bound lytic murein transglycosylase F (Haemophilus influenzae (strain PittGG)).